A 733-amino-acid chain; its full sequence is Protein ROG3 (733 aa).

The short motif at 460–463 (PPNY) is the PY-motif element. Residues 518–566 (RDNLGLPPSASSAAASRSLSPLLNVPAPEDGTERILPQSALGPNSGSVP) form a disordered region. Over residues 523–540 (LPPSASSAAASRSLSPLL) the composition is skewed to low complexity. Residues 625-628 (PPSY) carry the PY-motif motif. Disordered regions lie at residues 636 to 658 (QPRK…SIPT) and 693 to 733 (ELTS…GNKR). Residues 646 to 658 (RNSSTTLSSSIPT) are compositionally biased toward low complexity.

This sequence belongs to the arrestin family. In terms of assembly, interacts with RSP5 via its 2 PY-motifs.

Involved in resistance to GST substrate o-dinitrobenzene (o-DNB). This is Protein ROG3 (ROG3) from Saccharomyces cerevisiae (strain ATCC 204508 / S288c) (Baker's yeast).